Here is a 122-residue protein sequence, read N- to C-terminus: Small ribosomal subunit protein uS13 (122 aa).

The disordered stretch occupies residues 99-122 (RGQRTHTNARTRKGPAKAIAGKKK).

It belongs to the universal ribosomal protein uS13 family. As to quaternary structure, part of the 30S ribosomal subunit. Forms a loose heterodimer with protein S19. Forms two bridges to the 50S subunit in the 70S ribosome.

Its function is as follows. Located at the top of the head of the 30S subunit, it contacts several helices of the 16S rRNA. In the 70S ribosome it contacts the 23S rRNA (bridge B1a) and protein L5 of the 50S subunit (bridge B1b), connecting the 2 subunits; these bridges are implicated in subunit movement. Contacts the tRNAs in the A and P-sites. In Allorhizobium ampelinum (strain ATCC BAA-846 / DSM 112012 / S4) (Agrobacterium vitis (strain S4)), this protein is Small ribosomal subunit protein uS13.